Consider the following 1321-residue polypeptide: Serine/threonine-protein kinase SIK3 (1321 aa).

The segment at 1 to 59 (MAAAAASGAGGAAGAGTGGAGPAGRLLPPPAPGSPAAPAAVSPAAGQPRPPAPASRGPM) is disordered. Residues 8 to 22 (GAGGAAGAGTGGAGP) show a composition bias toward gly residues. Low complexity predominate over residues 36–47 (AAPAAVSPAAGQ). The 252-residue stretch at 66-317 (YEIDRTIGKG…MEQICKHKWM (252 aa)) folds into the Protein kinase domain. Residue Thr-71 is modified to Phosphothreonine. Residues 72 to 80 (IGKGNFAVV) and Lys-95 contribute to the ATP site. Glu-113 is subject to Phosphothreonine. The active-site Proton acceptor is the Asp-188. Thr-221 is modified (phosphothreonine; by LKB1). Residues 344–384 (PLNEDVLLAMEDMGLDKEQTLQSLRSDAYDHYSAIYSLLCD) enclose the UBA domain. Thr-469 bears the Phosphothreonine mark. A phosphoserine mark is found at Ser-551, Ser-591, and Ser-592. The disordered stretch occupies residues 585–614 (TPVDEESSDGEPDQEAVQSSTYKDSNTLHL). Residues 587 to 598 (VDEESSDGEPDQ) are compositionally biased toward acidic residues. The span at 600 to 613 (AVQSSTYKDSNTLH) shows a compositional bias: polar residues. 2 positions are modified to phosphoserine: Ser-626 and Ser-647. Residues 727 to 772 (IQPSSPPPNHPNNHLFRQPSNSPPPMSSAMIQPHGAASSSQFQGLP) are disordered. Residues 763–772 (ASSSQFQGLP) are compositionally biased toward polar residues. At Ser-866 the chain carries Phosphoserine. Positions 894–945 (LFSDQSRGSPSSYSPSTGVGFSPTQALKVPPLDQFPTFPPSAHQQPPHYTTS) are disordered. The span at 896–909 (SDQSRGSPSSYSPS) shows a compositional bias: low complexity. Residues 935-945 (AHQQPPHYTTS) are compositionally biased toward polar residues. Phosphoserine is present on Ser-978. Arg-986 carries the post-translational modification Omega-N-methylarginine. The segment covering 1256–1265 (SLMGSQQFQD) has biased composition (polar residues). The tract at residues 1256-1289 (SLMGSQQFQDGENEECGASLGGHEHPDLSDGSQH) is disordered.

The protein belongs to the protein kinase superfamily. CAMK Ser/Thr protein kinase family. SNF1 subfamily. As to quaternary structure, binds to and is activated by YWHAZ when phosphorylated on Thr-221. Interacts with 14-3-3 proteins. Interacts with HDAC4; this interaction leads to HDAC4 retention in the cytoplasm. Interacts with DEPTOR, MLST8/GbetaL, RICTOR and RPTOR. Mg(2+) serves as cofactor. Post-translationally, phosphorylated at Thr-221 by STK11/LKB1 in complex with STE20-related adapter-alpha (STRADA) pseudo kinase and CAB39. Phosphorylation at Thr-221 is inhibited in response to PTHLH/PTHrP. Phosphorylated at Thr-469 and Ser-551 in response to cAMP signaling. Expressed in chondrocytes.

The protein resides in the cytoplasm. It carries out the reaction L-seryl-[protein] + ATP = O-phospho-L-seryl-[protein] + ADP + H(+). The enzyme catalyses L-threonyl-[protein] + ATP = O-phospho-L-threonyl-[protein] + ADP + H(+). Its activity is regulated as follows. Activated by phosphorylation on Thr-221. In terms of biological role, positive regulator of mTOR signaling that functions by triggering the degradation of DEPTOR, an mTOR inhibitor. Involved in the dynamic regulation of mTOR signaling in chondrocyte differentiation during skeletogenesis. Negatively regulates cAMP signaling pathway possibly by acting on CRTC2/TORC2 and CRTC3/TORC3. Prevents HDAC4 translocation to the nucleus. The polypeptide is Serine/threonine-protein kinase SIK3 (Homo sapiens (Human)).